A 595-amino-acid chain; its full sequence is Chaperone protein HscA homolog (595 aa).

This sequence belongs to the heat shock protein 70 family.

In terms of biological role, chaperone involved in the maturation of iron-sulfur cluster-containing proteins. Has a low intrinsic ATPase activity which is markedly stimulated by HscB. This chain is Chaperone protein HscA homolog, found in Rickettsia conorii (strain ATCC VR-613 / Malish 7).